The sequence spans 127 residues: Glycine cleavage system H protein (127 aa).

A Lipoyl-binding domain is found at Glu-22–Lys-104. Lys-63 is modified (N6-lipoyllysine).

Belongs to the GcvH family. The glycine cleavage system is composed of four proteins: P, T, L and H. (R)-lipoate serves as cofactor.

The glycine cleavage system catalyzes the degradation of glycine. The H protein shuttles the methylamine group of glycine from the P protein to the T protein. The chain is Glycine cleavage system H protein from Nitratidesulfovibrio vulgaris (strain DP4) (Desulfovibrio vulgaris).